The chain runs to 456 residues: MEQLKEKFEPLFSVLPQVKSPGYRVPFREKLKWTGIILVLYFFLAQIPLYGLSANAVDQFAQFRAVLAGNFGSILTLGIGPIVSASIILQLLVGGKILKLDLSRHEDKAFFQGLQKLLAIVFTFFEALIFVLTGSLAPSAPQFVWVLILQLTIGGILIIFLDEVVSKWGFGSGVGLFIAAGVSQEIIVGAFNPLSAPTQPGVPAGRITGFLYLLFTGQSPDFQYYVLPVLALIAVFLVVVYAESMRVEIPISMGGGKRLSRGAVGKYPLRFIYASNMPVILTSALLLNVQLLANVFQKLGYPILGTVSNGQAVDGLAYLLTAPRSIDALILDPFRVVFYAVVFIGLCVLFAWLWVEISNIGPRHVARQLYQMGMQIPGFRSSRGQFEKILKRYIPTITILGGAFVGLLAFVADLTGSLGGGTGVLLTVGIVYRLYEEIAQEQLMDMHPILRSFLGD.

The Cytoplasmic segment spans residues 1–21; the sequence is MEQLKEKFEPLFSVLPQVKSP. The chain crosses the membrane as a helical span at residues 22–48; the sequence is GYRVPFREKLKWTGIILVLYFFLAQIP. Topologically, residues 49 to 59 are extracellular; it reads LYGLSANAVDQ. Positions 60 to 67 form an intramembrane region, helical; sequence FAQFRAVL. Residues 60 to 88 traverse the membrane as a discontinuously helical segment; it reads FAQFRAVLAGNFGSILTLGIGPIVSASII. Residues 68 to 79 lie within the membrane without spanning it; sequence AGNFGSILTLGI. The helical intramembrane region spans 80–88; sequence GPIVSASII. At 89 to 109 the chain is on the cytoplasmic side; sequence LQLLVGGKILKLDLSRHEDKA. Residues 110 to 134 traverse the membrane as a helical segment; the sequence is FFQGLQKLLAIVFTFFEALIFVLTG. At 135 to 141 the chain is on the extracellular side; that stretch reads SLAPSAP. A helical transmembrane segment spans residues 142–166; that stretch reads QFVWVLILQLTIGGILIIFLDEVVS. At 167-172 the chain is on the cytoplasmic side; sequence KWGFGS. The helical transmembrane segment at 173 to 191 threads the bilayer; sequence GVGLFIAAGVSQEIIVGAF. The Extracellular portion of the chain corresponds to 192–224; that stretch reads NPLSAPTQPGVPAGRITGFLYLLFTGQSPDFQY. Residues 225 to 246 traverse the membrane as a helical segment; it reads YVLPVLALIAVFLVVVYAESMR. Residues 247 to 275 lie on the Cytoplasmic side of the membrane; that stretch reads VEIPISMGGGKRLSRGAVGKYPLRFIYAS. Residues 276 to 297 traverse the membrane as a helical segment; the sequence is NMPVILTSALLLNVQLLANVFQ. Topologically, residues 298-334 are extracellular; the sequence is KLGYPILGTVSNGQAVDGLAYLLTAPRSIDALILDPF. The chain crosses the membrane as a helical span at residues 335–354; that stretch reads RVVFYAVVFIGLCVLFAWLW. Residues 355-397 lie on the Cytoplasmic side of the membrane; the sequence is VEISNIGPRHVARQLYQMGMQIPGFRSSRGQFEKILKRYIPTI. The helical transmembrane segment at 398 to 416 threads the bilayer; that stretch reads TILGGAFVGLLAFVADLTG. Residues 417 to 419 are Extracellular-facing; it reads SLG. The helical transmembrane segment at 420 to 434 threads the bilayer; that stretch reads GGTGVLLTVGIVYRL. Residues 435–456 lie on the Cytoplasmic side of the membrane; sequence YEEIAQEQLMDMHPILRSFLGD.

Belongs to the SecY/SEC61-alpha family. Component of the Sec protein translocase complex. Heterotrimer consisting of alpha (SecY), beta (SecG) and gamma (SecE) subunits. The heterotrimers can form oligomers, although 1 heterotrimer is thought to be able to translocate proteins. Interacts with the ribosome. May interact with SecDF, and other proteins may be involved.

The protein localises to the cell membrane. Functionally, the central subunit of the protein translocation channel SecYEG. Consists of two halves formed by TMs 1-5 and 6-10. These two domains form a lateral gate at the front which open onto the bilayer between TMs 2 and 7, and are clamped together by SecE at the back. The channel is closed by both a pore ring composed of hydrophobic SecY resides and a short helix (helix 2A) on the extracellular side of the membrane which forms a plug. The plug probably moves laterally to allow the channel to open. The ring and the pore may move independently. This chain is Protein translocase subunit SecY, found in Methanothermobacter thermautotrophicus (strain ATCC 29096 / DSM 1053 / JCM 10044 / NBRC 100330 / Delta H) (Methanobacterium thermoautotrophicum).